The chain runs to 907 residues: Whirlin (907 aa).

The PDZ 1 domain occupies 140-223 (LVSLRRAKAH…LVLSVYSAGR (84 aa)). Positions 243–264 (SISPPSGLPQPHGGALRQQEGD) are disordered. A PDZ 2 domain is found at 279 to 361 (KVNLVLGDGR…LILTVKDVGR (83 aa)). Disordered stretches follow at residues 502-540 (SMKARQPPGPGAGDTYSMVSYSDTGSSTGSHGTSTTVSS), 565-663 (SVDD…SSKR), 684-717 (QSPPHLKSPSAEATVAGGCLLPPSPSGHPDQTGT), and 742-815 (PQTR…PTST). The segment covering 521–540 (SYSDTGSSTGSHGTSTTVSS) has biased composition (low complexity). Residues 609–626 (PPSSMPSCSGTVFSAPQN) show a composition bias toward polar residues. The segment covering 628 to 642 (SPPAGTAPTPGTSSA) has biased composition (low complexity). Ser685 carries the post-translational modification Phosphoserine. Residues 743–762 (QTRTASTLSQLSDSGQTLSE) are compositionally biased toward polar residues. The span at 789 to 800 (SSKELPRNERPT) shows a compositional bias: basic and acidic residues. Positions 816–899 (LVRVKKSAAT…TKDRDYIDFL (84 aa)) constitute a PDZ 3 domain.

As to quaternary structure, forms homooligomers. Interacts (via C-terminal PDZ domain) with MYO15A; this interaction is necessary for localization of WHRN to stereocilia tips. Interacts (via C-terminal PDZ domain) with MPP1/p55. Interacts with LRRC4C/NGL1. Interacts with MYO7A. Interacts with RPGR. Interacts with EPS8. Interacts with CASK. Interacts with CIB2. Component of USH2 complex, composed of ADGRV1, PDZD7, USH2A and WHRN. Interacts (via PDZ domains) with PDZD7; the interaction is direct. Interacts (via N-terminal PDZ domain) with USH2A (via cytoplasmic region). Interacts with ADGRV1/MASS1 (via cytoplasmic region).

The protein resides in the cytoplasm. It is found in the cell projection. It localises to the stereocilium. Its subcellular location is the growth cone. The protein localises to the photoreceptor inner segment. The protein resides in the synapse. Involved in hearing and vision as member of the USH2 complex. Necessary for elongation and maintenance of inner and outer hair cell stereocilia in the organ of Corti in the inner ear. Involved in the maintenance of the hair bundle ankle region, which connects stereocilia in cochlear hair cells of the inner ear. In retina photoreceptors, required for the maintenance of periciliary membrane complex that seems to play a role in regulating intracellular protein transport. This is Whirlin from Homo sapiens (Human).